The primary structure comprises 203 residues: Thymidylate kinase (203 aa).

ATP is bound at residue 10–17 (GIDGAGKS).

The protein belongs to the thymidylate kinase family.

The enzyme catalyses dTMP + ATP = dTDP + ADP. Functionally, phosphorylation of dTMP to form dTDP in both de novo and salvage pathways of dTTP synthesis. The polypeptide is Thymidylate kinase (Cupriavidus pinatubonensis (strain JMP 134 / LMG 1197) (Cupriavidus necator (strain JMP 134))).